A 561-amino-acid polypeptide reads, in one-letter code: Foot protein 1 variant 1 (561 aa).

Positions M1–A20 are cleaved as a signal peptide. Y22 carries the 3',4'-dihydroxyphenylalanine modification. P33 is modified (4-hydroxyproline). One copy of the A-1; approximate repeat lies at V41–K50. Positions V41–K410 are 13 X 10 AA A-P-P-P-A-W-T-A-W-K. 7'-hydroxytryptophan is present on residues W46, W49, W56, and W59. Residues W46, W49, W56, and W59 are each glycosylated (C-linked (Man) hydroxytryptophan). Residues A51–K60 form an A-2; approximate repeat. The stretch at A61–K70 is one B-1 repeat. Positions A61–R440 are 27 X 10 AA A-T-P-K-P-W-T-A-W-K. P65 carries the post-translational modification 4-hydroxyproline. The C-linked (Man) tryptophan glycan is linked to W66. 7'-hydroxytryptophan is present on W69. The C-linked (Man) hydroxytryptophan glycan is linked to W69. One copy of the A-3 repeat lies at A71–K80. 3 positions are modified to 4-hydroxyproline: P72, P73, and P74. 2 positions are modified to 7'-hydroxytryptophan: W76 and W79. W76 and W79 each carry a C-linked (Man) hydroxytryptophan glycan. Residues A81–K90 form a B-2 repeat. 4-hydroxyproline is present on P85. A glycan (C-linked (Man) tryptophan) is linked at W86. Residue W89 is modified to 7'-hydroxytryptophan. C-linked (Man) hydroxytryptophan glycosylation occurs at W89. Residues A91–K100 form an A-4; approximate repeat. 4-hydroxyproline is present on residues P92, P93, and P94. 7'-hydroxytryptophan occurs at positions 96 and 99. Residues W96 and W99 are each glycosylated (C-linked (Man) hydroxytryptophan). One copy of the B-3 repeat lies at A101–K110. Residue P105 is modified to 4-hydroxyproline. W106 carries a C-linked (Man) tryptophan glycan. At W109 the chain carries 7'-hydroxytryptophan. C-linked (Man) hydroxytryptophan glycosylation occurs at W109. The A-5 repeat unit spans residues A111–K120. Residues P112, P113, and P114 each carry the 4-hydroxyproline modification. W116 and W119 each carry 7'-hydroxytryptophan. Residues W116 and W119 are each glycosylated (C-linked (Man) hydroxytryptophan). One copy of the B-4; approximate repeat lies at A121 to K130. A 4-hydroxyproline modification is found at P125. C-linked (Man) tryptophan glycosylation occurs at W126. Position 129 is a 7'-hydroxytryptophan (W129). Residue W129 is glycosylated (C-linked (Man) hydroxytryptophan). The stretch at A131–K140 is one B-5 repeat. The residue at position 135 (P135) is a 4-hydroxyproline. W136 is a glycosylation site (C-linked (Man) tryptophan). W139 is modified (7'-hydroxytryptophan). W139 carries a C-linked (Man) hydroxytryptophan glycan. One copy of the B-6 repeat lies at A141–K150. P145 bears the 4-hydroxyproline mark. The C-linked (Man) tryptophan glycan is linked to W146. Position 149 is a 7'-hydroxytryptophan (W149). W149 carries a C-linked (Man) hydroxytryptophan glycan. One copy of the B-7 repeat lies at A151–K160. Residue P155 is modified to 4-hydroxyproline. The C-linked (Man) tryptophan glycan is linked to W156. W159 bears the 7'-hydroxytryptophan mark. A glycan (C-linked (Man) hydroxytryptophan) is linked at W159. The stretch at A161–K170 is one B-8 repeat. P165 carries the 4-hydroxyproline modification. Residue W166 is glycosylated (C-linked (Man) tryptophan). At W169 the chain carries 7'-hydroxytryptophan. C-linked (Man) hydroxytryptophan glycosylation is present at W169. The stretch at A171–K180 is one B-9; approximate repeat. A 4-hydroxyproline modification is found at P175. The C-linked (Man) tryptophan glycan is linked to W176. W179 bears the 7'-hydroxytryptophan mark. W179 carries C-linked (Man) hydroxytryptophan glycosylation. A B-10 repeat occupies A181 to K190. P185 bears the 4-hydroxyproline mark. The C-linked (Man) tryptophan glycan is linked to W186. W189 carries the 7'-hydroxytryptophan modification. A glycan (C-linked (Man) hydroxytryptophan) is linked at W189. The B-11 repeat unit spans residues A191–K200. P195 carries the 4-hydroxyproline modification. W196 carries C-linked (Man) tryptophan glycosylation. A 7'-hydroxytryptophan modification is found at W199. Residue W199 is glycosylated (C-linked (Man) hydroxytryptophan). One copy of the A-6; approximate repeat lies at A201–K210. Residues P202, P203, and P204 each carry the 4-hydroxyproline modification. Residues W206 and W209 each carry the 7'-hydroxytryptophan modification. W206 and W209 each carry a C-linked (Man) hydroxytryptophan glycan. One copy of the B-12; approximate repeat lies at A211–K220. P215 bears the 4-hydroxyproline mark. The C-linked (Man) tryptophan glycan is linked to W216. 7'-hydroxytryptophan is present on W219. W219 is a glycosylation site (C-linked (Man) hydroxytryptophan). The B-13 repeat unit spans residues A221–K230. The residue at position 225 (P225) is a 4-hydroxyproline. A glycan (C-linked (Man) tryptophan) is linked at W226. 7'-hydroxytryptophan is present on W229. A glycan (C-linked (Man) hydroxytryptophan) is linked at W229. A B-14 repeat occupies A231–K240. 4-hydroxyproline is present on P235. W236 carries a C-linked (Man) tryptophan glycan. W239 carries the 7'-hydroxytryptophan modification. C-linked (Man) hydroxytryptophan glycosylation occurs at W239. The stretch at A241–K250 is one B-15; approximate repeat. Position 245 is a 4-hydroxyproline (P245). W246 carries C-linked (Man) tryptophan glycosylation. W249 is subject to 7'-hydroxytryptophan. W249 carries a C-linked (Man) hydroxytryptophan glycan. A B-16 repeat occupies A251–K260. Position 255 is a 4-hydroxyproline (P255). Residue W256 is glycosylated (C-linked (Man) tryptophan). W259 carries the post-translational modification 7'-hydroxytryptophan. W259 carries a C-linked (Man) hydroxytryptophan glycan. One copy of the A-7 repeat lies at A261–K270. 3 positions are modified to 4-hydroxyproline: P262, P263, and P264. 7'-hydroxytryptophan occurs at positions 266 and 269. C-linked (Man) hydroxytryptophan glycosylation is found at W266 and W269. Residues A271–K280 form a B-17 repeat. P275 bears the 4-hydroxyproline mark. W276 carries a C-linked (Man) tryptophan glycan. W279 bears the 7'-hydroxytryptophan mark. W279 is a glycosylation site (C-linked (Man) hydroxytryptophan). The A-8; approximate repeat unit spans residues A281–K290. Residues P282, P283, and P284 each carry the 4-hydroxyproline modification. W286 and W289 each carry 7'-hydroxytryptophan. Residues W286 and W289 are each glycosylated (C-linked (Man) hydroxytryptophan). The stretch at A291–K300 is one B-18 repeat. Position 295 is a 4-hydroxyproline (P295). The C-linked (Man) tryptophan glycan is linked to W296. Position 299 is a 7'-hydroxytryptophan (W299). W299 carries C-linked (Man) hydroxytryptophan glycosylation. One copy of the A-9; approximate repeat lies at A301–K310. 4-hydroxyproline is present on residues P302, P303, and P304. Residues W306 and W309 each carry the 7'-hydroxytryptophan modification. C-linked (Man) hydroxytryptophan glycans are attached at residues W306 and W309. Residues A311 to K320 form a B-19 repeat. P315 carries the 4-hydroxyproline modification. C-linked (Man) tryptophan glycosylation occurs at W316. W319 carries the post-translational modification 7'-hydroxytryptophan. W319 carries a C-linked (Man) hydroxytryptophan glycan. A B-20 repeat occupies A321–K330. Position 325 is a 4-hydroxyproline (P325). W326 carries C-linked (Man) tryptophan glycosylation. W329 carries the 7'-hydroxytryptophan modification. A C-linked (Man) hydroxytryptophan glycan is attached at W329. A B-21 repeat occupies A331 to K340. P335 bears the 4-hydroxyproline mark. A C-linked (Man) tryptophan glycan is attached at W336. 7'-hydroxytryptophan is present on W339. C-linked (Man) hydroxytryptophan glycosylation occurs at W339. A B-22 repeat occupies A341 to K350. P345 carries the post-translational modification 4-hydroxyproline. C-linked (Man) tryptophan glycosylation occurs at W346. W349 carries the 7'-hydroxytryptophan modification. The C-linked (Man) hydroxytryptophan glycan is linked to W349. One copy of the A-10; approximate repeat lies at V351–K360. P352, P353, and P354 each carry 4-hydroxyproline. 4 positions are modified to 7'-hydroxytryptophan: W356, W359, W366, and W369. W356, W359, W366, and W369 each carry a C-linked (Man) hydroxytryptophan glycan. The stretch at A361–K370 is one A-11; approximate repeat. One copy of the B-23 repeat lies at A371–K380. P375 carries the post-translational modification 4-hydroxyproline. W376 carries C-linked (Man) tryptophan glycosylation. W379 carries the post-translational modification 7'-hydroxytryptophan. W379 carries a C-linked (Man) hydroxytryptophan glycan. Residues A381–K390 form an A-12 repeat. A 4-hydroxyproline mark is found at P382, P383, and P384. 7'-hydroxytryptophan occurs at positions 386 and 389. C-linked (Man) hydroxytryptophan glycans are attached at residues W386 and W389. The stretch at A391–K400 is one B-24 repeat. P395 carries the 4-hydroxyproline modification. A glycan (C-linked (Man) tryptophan) is linked at W396. A 7'-hydroxytryptophan modification is found at W399. W399 is a glycosylation site (C-linked (Man) hydroxytryptophan). The A-13 repeat unit spans residues A401 to K410. 3 positions are modified to 4-hydroxyproline: P402, P403, and P404. 7'-hydroxytryptophan is present on residues W406 and W409. 2 C-linked (Man) hydroxytryptophan glycosylation sites follow: W406 and W409. Residues A411–K420 form a B-25 repeat. A 4-hydroxyproline modification is found at P415. A glycan (C-linked (Man) tryptophan) is linked at W416. 7'-hydroxytryptophan is present on W419. W419 carries a C-linked (Man) hydroxytryptophan glycan. The B-26; approximate repeat unit spans residues A421 to K430. Position 425 is a 4-hydroxyproline (P425). Residue W426 is glycosylated (C-linked (Man) tryptophan). Position 429 is a 7'-hydroxytryptophan (W429). W429 carries a C-linked (Man) hydroxytryptophan glycan. The B-27; approximate repeat unit spans residues A431–R440. P435 carries the 4-hydroxyproline modification. W436 carries C-linked (Man) tryptophan glycosylation. W439 carries the 7'-hydroxytryptophan modification. C-linked (Man) hydroxytryptophan glycosylation occurs at W439. The tract at residues G452–G507 is disordered. Residues H453 to G462 are compositionally biased toward gly residues. In terms of domain architecture, Collagen-like spans G459–G510. Low complexity predominate over residues K466–P496. 3 positions are modified to 4-hydroxyproline: P497, P500, and P506.

In terms of tissue distribution, produced by the byssal gland.

Its subcellular location is the secreted. Functionally, provides adhesiveness to the mussel's foot. Mussels produce one of the strongest water insoluble glues. The mussel's adhesive is a bundle of threads, called a byssus, formed by a fibrous collagenous core coated with adhesive proteins. This is Foot protein 1 variant 1 from Perna viridis (Asian green mussel).